Reading from the N-terminus, the 198-residue chain is N-acetyltransferase 9-like protein (198 aa).

The 173-residue stretch at 14-186 (IILVPYKEKH…SNNFTNLTAD (173 aa)) folds into the N-acetyltransferase domain.

It belongs to the acetyltransferase family. GNAT subfamily.

The polypeptide is N-acetyltransferase 9-like protein (nat9) (Nematostella vectensis (Starlet sea anemone)).